Reading from the N-terminus, the 355-residue chain is Diacylglycerol O-acyltransferase 2A (355 aa).

2 helical membrane-spanning segments follow: residues 41 to 61 and 62 to 78; these read LLWCSMMSICMFIFFFLCSIP and VLLWFPIILYLTWILVW. Asn-142 carries an N-linked (GlcNAc...) asparagine glycan.

This sequence belongs to the diacylglycerol acyltransferase family.

It is found in the endoplasmic reticulum membrane. It catalyses the reaction an acyl-CoA + a 1,2-diacyl-sn-glycerol = a triacyl-sn-glycerol + CoA. It functions in the pathway glycerolipid metabolism; triacylglycerol biosynthesis. Its function is as follows. Catalyzes the terminal and only committed step in triacylglycerol synthesis by using diacylglycerol and fatty acyl CoA as substrates. Required for storage lipid synthesis. This is Diacylglycerol O-acyltransferase 2A (DGAT2A) from Umbelopsis ramanniana (Oleaginous fungus).